The sequence spans 405 residues: Argininosuccinate synthase (405 aa).

Residues 10–18 (AYSGGLDTS) and Ala-37 contribute to the ATP site. 2 residues coordinate L-citrulline: Tyr-88 and Ser-93. Gly-118 is an ATP binding site. 3 residues coordinate L-aspartate: Thr-120, Asn-124, and Asp-125. Asn-124 provides a ligand contact to L-citrulline. Residues Arg-128, Ser-179, Ser-188, Glu-264, and Tyr-276 each contribute to the L-citrulline site.

This sequence belongs to the argininosuccinate synthase family. Type 1 subfamily. As to quaternary structure, homotetramer.

Its subcellular location is the cytoplasm. The enzyme catalyses L-citrulline + L-aspartate + ATP = 2-(N(omega)-L-arginino)succinate + AMP + diphosphate + H(+). The protein operates within amino-acid biosynthesis; L-arginine biosynthesis; L-arginine from L-ornithine and carbamoyl phosphate: step 2/3. The protein is Argininosuccinate synthase of Ectopseudomonas mendocina (strain ymp) (Pseudomonas mendocina).